We begin with the raw amino-acid sequence, 108 residues long: Protein SMALL AUXIN UP-REGULATED RNA 8 (108 aa).

The protein belongs to the ARG7 family. Expressed in seedlings, leaves and flowers.

It localises to the cell membrane. Functionally, provide a mechanistic link between auxin and plasma membrane H(+)-ATPases (PM H(+)-ATPases, e.g. AHA1 and AHA2), and triggers PM H(+)-ATPases activity by promoting phosphorylation of their C-terminal autoinhibitory domain as a result of PP2C-D subfamily of type 2C phosphatases inhibition, thus leading to the acidification of the apoplast and the facilitation of solutes and water uptake to drive cell expansion. Triggers plant growth probably by promoting cell elongation. Regulates branch angles and bending. In Arabidopsis thaliana (Mouse-ear cress), this protein is Protein SMALL AUXIN UP-REGULATED RNA 8.